Reading from the N-terminus, the 313-residue chain is tRNA-cytidine(32) 2-sulfurtransferase (313 aa).

The PP-loop motif motif lies at 47-52; the sequence is SGGKDS. [4Fe-4S] cluster contacts are provided by Cys122, Cys125, and Cys213. A disordered region spans residues 288–313; the sequence is PVGWQPEDDEDTEKRPPVRLDVLEIK. Basic and acidic residues predominate over residues 299–313; the sequence is TEKRPPVRLDVLEIK.

This sequence belongs to the TtcA family. In terms of assembly, homodimer. Mg(2+) is required as a cofactor. [4Fe-4S] cluster serves as cofactor.

Its subcellular location is the cytoplasm. It carries out the reaction cytidine(32) in tRNA + S-sulfanyl-L-cysteinyl-[cysteine desulfurase] + AH2 + ATP = 2-thiocytidine(32) in tRNA + L-cysteinyl-[cysteine desulfurase] + A + AMP + diphosphate + H(+). Its pathway is tRNA modification. In terms of biological role, catalyzes the ATP-dependent 2-thiolation of cytidine in position 32 of tRNA, to form 2-thiocytidine (s(2)C32). The sulfur atoms are provided by the cysteine/cysteine desulfurase (IscS) system. This is tRNA-cytidine(32) 2-sulfurtransferase from Yersinia pseudotuberculosis serotype O:1b (strain IP 31758).